We begin with the raw amino-acid sequence, 318 residues long: Acetyl-coenzyme A carboxylase carboxyl transferase subunit alpha (318 aa).

The CoA carboxyltransferase C-terminal domain maps to 34–295 (SIEEEITKLR…KATIKQQLAQ (262 aa)).

It belongs to the AccA family. Acetyl-CoA carboxylase is a heterohexamer composed of biotin carboxyl carrier protein (AccB), biotin carboxylase (AccC) and two subunits each of ACCase subunit alpha (AccA) and ACCase subunit beta (AccD).

The protein resides in the cytoplasm. It catalyses the reaction N(6)-carboxybiotinyl-L-lysyl-[protein] + acetyl-CoA = N(6)-biotinyl-L-lysyl-[protein] + malonyl-CoA. Its pathway is lipid metabolism; malonyl-CoA biosynthesis; malonyl-CoA from acetyl-CoA: step 1/1. Its function is as follows. Component of the acetyl coenzyme A carboxylase (ACC) complex. First, biotin carboxylase catalyzes the carboxylation of biotin on its carrier protein (BCCP) and then the CO(2) group is transferred by the carboxyltransferase to acetyl-CoA to form malonyl-CoA. This Pseudoalteromonas atlantica (strain T6c / ATCC BAA-1087) protein is Acetyl-coenzyme A carboxylase carboxyl transferase subunit alpha.